We begin with the raw amino-acid sequence, 383 residues long: uncharacterized protein (383 aa).

Belongs to the peptidase M20 family.

This is an uncharacterized protein from Staphylococcus aureus (strain MRSA252).